Here is a 941-residue protein sequence, read N- to C-terminus: Bifunctional glutamine synthetase adenylyltransferase/adenylyl-removing enzyme (941 aa).

The tract at residues 1 to 431 (MSSAPPFAAA…TFRNAFRLAG (431 aa)) is adenylyl removase. The adenylyl transferase stretch occupies residues 447-941 (NGHGMRPHAG…DGTIAQAEVK (495 aa)).

The protein belongs to the GlnE family. It depends on Mg(2+) as a cofactor.

It catalyses the reaction [glutamine synthetase]-O(4)-(5'-adenylyl)-L-tyrosine + phosphate = [glutamine synthetase]-L-tyrosine + ADP. The enzyme catalyses [glutamine synthetase]-L-tyrosine + ATP = [glutamine synthetase]-O(4)-(5'-adenylyl)-L-tyrosine + diphosphate. Involved in the regulation of glutamine synthetase GlnA, a key enzyme in the process to assimilate ammonia. When cellular nitrogen levels are high, the C-terminal adenylyl transferase (AT) inactivates GlnA by covalent transfer of an adenylyl group from ATP to specific tyrosine residue of GlnA, thus reducing its activity. Conversely, when nitrogen levels are low, the N-terminal adenylyl removase (AR) activates GlnA by removing the adenylyl group by phosphorolysis, increasing its activity. The regulatory region of GlnE binds the signal transduction protein PII (GlnB) which indicates the nitrogen status of the cell. The chain is Bifunctional glutamine synthetase adenylyltransferase/adenylyl-removing enzyme from Bordetella bronchiseptica (strain ATCC BAA-588 / NCTC 13252 / RB50) (Alcaligenes bronchisepticus).